The sequence spans 197 residues: Chaperone protein dnaJ 20, chloroplastic (197 aa).

Residues 1 to 60 (MKCYKSSSILSTNHHPFFYKQQPISSLQPTSIPTTISYPTRTRFSSTRIQSRLTHDDPVK) constitute a chloroplast transit peptide. The region spanning 66 to 133 (SFYDLLGVTE…RRRVLYDRDL (68 aa)) is the J domain. The disordered stretch occupies residues 169 to 197 (SGLRRRSNQKDNNTMSWAARMRRQQQESS).

This sequence belongs to the DnaJ family. C/III subfamily. Light-grown seedlings.

It localises to the plastid. The protein resides in the chloroplast. Functionally, plays a continuous role in plant development probably in the structural organization of compartments. In Arabidopsis thaliana (Mouse-ear cress), this protein is Chaperone protein dnaJ 20, chloroplastic (ATJ20).